Here is a 611-residue protein sequence, read N- to C-terminus: MWTHPINYDVIVVGAGHAGCEAAFCSAKMGASVLILSSNLDTIAKLSCNPAVGGIGKGHIVREIDALGGIMAEVTDQSGIQFRILNQTKGPAVRAPRAQVDKQMYHIHMKRLLESSPGLHIMQGTVESLLDNENVIQGVTTKEGITYLGKTVILSSGTFMRGLIHIGDLNFPGGRLGDPAATGLSLALKERGFPISRLKTGTPPRLLASSIDFSVTEEQPGDPGVGFVHRSEPFVPPLPQVSCYITHTTEKTKDIIAANIHRSALYGGRIEGIGPRYCPSIEDKIVKFADKERHHIFIEPEGIHTQEVYVNGLSTSMPFDVQYDMIRSVLGLENAIITRPAYAIEYDYVHGNVIYPTLESKLIEGLFLCGQINGTTGYEEAAAQGLIAGINAVNKVLKKPAFIPSRQESYIGVMLDDLTTQILDEPYRMFTGRAEHRLLLRQDNACLRLSHYGRDLGLLSKERYEIFENQKQIIEEEKLRLSKTFKKYGNSVVSLAKALCRPEVSYDTLREAFPEDIRDYGSTLNASLEMEIKYAGYIDRQKALIHSLSKSENMVIPEDIDYQSISSLSLEAREKLAKFTPRTIGSASRISGIACADIQVLMVAVKKHAHQ.

14–19 (GAGHAG) is a binding site for FAD. NAD(+) is bound at residue 274–288 (GPRYCPSIEDKIVKF).

Belongs to the MnmG family. Homodimer. Heterotetramer of two MnmE and two MnmG subunits. Requires FAD as cofactor.

It localises to the cytoplasm. In terms of biological role, NAD-binding protein involved in the addition of a carboxymethylaminomethyl (cmnm) group at the wobble position (U34) of certain tRNAs, forming tRNA-cmnm(5)s(2)U34. In Chlamydia abortus (strain DSM 27085 / S26/3) (Chlamydophila abortus), this protein is tRNA uridine 5-carboxymethylaminomethyl modification enzyme MnmG.